We begin with the raw amino-acid sequence, 230 residues long: Ion-translocating oxidoreductase complex subunit E (230 aa).

A run of 5 helical transmembrane segments spans residues 39 to 59 (LGLG…VSLV), 69 to 89 (IPVF…LMNA), 93 to 113 (GLYL…IIIG), 124 to 144 (VLPA…VLVV), and 182 to 202 (AFLL…LIAA).

The protein belongs to the NqrDE/RnfAE family. In terms of assembly, the complex is composed of six subunits: RnfA, RnfB, RnfC, RnfD, RnfE and RnfG.

The protein localises to the cell inner membrane. Part of a membrane-bound complex that couples electron transfer with translocation of ions across the membrane. This Vibrio cholerae serotype O1 (strain ATCC 39315 / El Tor Inaba N16961) protein is Ion-translocating oxidoreductase complex subunit E.